Here is a 299-residue protein sequence, read N- to C-terminus: Bifunctional protein FolD (299 aa).

Residues 179-181 (GPG) and Ile-245 each bind NADP(+).

The protein belongs to the tetrahydrofolate dehydrogenase/cyclohydrolase family. Homodimer.

It carries out the reaction (6R)-5,10-methylene-5,6,7,8-tetrahydrofolate + NADP(+) = (6R)-5,10-methenyltetrahydrofolate + NADPH. The enzyme catalyses (6R)-5,10-methenyltetrahydrofolate + H2O = (6R)-10-formyltetrahydrofolate + H(+). The protein operates within one-carbon metabolism; tetrahydrofolate interconversion. Catalyzes the oxidation of 5,10-methylenetetrahydrofolate to 5,10-methenyltetrahydrofolate and then the hydrolysis of 5,10-methenyltetrahydrofolate to 10-formyltetrahydrofolate. The polypeptide is Bifunctional protein FolD (Deinococcus radiodurans (strain ATCC 13939 / DSM 20539 / JCM 16871 / CCUG 27074 / LMG 4051 / NBRC 15346 / NCIMB 9279 / VKM B-1422 / R1)).